The sequence spans 143 residues: Large ribosomal subunit protein uL15 (143 aa).

The tract at residues 1 to 57 is disordered; that stretch reads MQLNNLKPAAGSKHAKRRVGRGIGSGLGKTAGRGHKGQKSRSGGFHKVGFEGGQMPL. Positions 21–31 are enriched in gly residues; the sequence is RGIGSGLGKTA.

Belongs to the universal ribosomal protein uL15 family. In terms of assembly, part of the 50S ribosomal subunit.

In terms of biological role, binds to the 23S rRNA. This Ralstonia pickettii (strain 12J) protein is Large ribosomal subunit protein uL15.